The following is a 317-amino-acid chain: Putative GTPase PH0274 (317 aa).

GTP-binding positions include 54–62 (GPPGAGKST), D196, and 231–233 (VGT).

Belongs to the SIMIBI class G3E GTPase family. ArgK/MeaB subfamily.

Its function is as follows. May have GTPase activity. May also bind and hydrolyze ATP. May function as chaperone. In Pyrococcus horikoshii (strain ATCC 700860 / DSM 12428 / JCM 9974 / NBRC 100139 / OT-3), this protein is Putative GTPase PH0274.